We begin with the raw amino-acid sequence, 115 residues long: NAD(P)H-quinone oxidoreductase subunit M (115 aa).

This sequence belongs to the complex I NdhM subunit family. In terms of assembly, NDH-1 can be composed of about 15 different subunits; different subcomplexes with different compositions have been identified which probably have different functions.

The protein localises to the cellular thylakoid membrane. The catalysed reaction is a plastoquinone + NADH + (n+1) H(+)(in) = a plastoquinol + NAD(+) + n H(+)(out). It carries out the reaction a plastoquinone + NADPH + (n+1) H(+)(in) = a plastoquinol + NADP(+) + n H(+)(out). In terms of biological role, NDH-1 shuttles electrons from an unknown electron donor, via FMN and iron-sulfur (Fe-S) centers, to quinones in the respiratory and/or the photosynthetic chain. The immediate electron acceptor for the enzyme in this species is believed to be plastoquinone. Couples the redox reaction to proton translocation, and thus conserves the redox energy in a proton gradient. Cyanobacterial NDH-1 also plays a role in inorganic carbon-concentration. The polypeptide is NAD(P)H-quinone oxidoreductase subunit M (Synechococcus sp. (strain WH7803)).